The chain runs to 135 residues: Histone H1, macronuclear (135 aa).

The segment covering 1-17 (MPAKTATAVKRTTTTKK) has biased composition (low complexity). The tract at residues 1-135 (MPAKTATAVK…GGKKKSAKKN (135 aa)) is disordered. 2 stretches are compositionally biased toward basic residues: residues 18–54 (SAAK…RRTP) and 62–79 (KATK…RSAT). A compositionally biased stretch (low complexity) spans 80–112 (KKTTAAPAAAAAPATDAPAAAATPSKATGSAKK). Over residues 113-135 (ASARKSSAKKPAKGGKKKSAKKN) the composition is skewed to basic residues.

It is found in the nucleus. The protein resides in the chromosome. Its function is as follows. Histones H1 are necessary for the condensation of nucleosome chains into higher-order structures. The protein is Histone H1, macronuclear of Euplotes eurystomus (Ciliate).